We begin with the raw amino-acid sequence, 570 residues long: MPAKISRAAYADMYGPTTGDKVRLADTELFIEVEKDFTTYGEEVKFGGGKVIRDGMGQSQVSRADGAVDTVITNALVIDVTGIYKADIGLRDGRIAAIGKAGNPDTQPGVNIIVGPGTEAIAGEGKILTAGGFDAHIHFICPQQIEEALMSGLTTMLGGGTGPAHGTLATTCTPGSFHIGRMIQSFDAFPMNIGLAGKGNASLPAPLIEMIKAGACAMKLHEDWGTTPAAIDNCLAVADDHDVQVMIHTDTLNESGFVENTIAAFKGRTIHAFHTEGAGGGHAPDIIKVAGLPNVIPSSTNPTRPYTVNTIAEHLDMLMVCHHLSPSIPEDVAFAESRIRKETIAAEDILHDLGAFSIISSDSQAMGRVGEVIIRTWQTADKMKRQRGKLPEETGDNDNFRVKRYIAKYTINPAIAHGVSKHIGSIEVGKRADLVLWNPAFFGVKPEMILLGGTIAAAPMGDPNASIPTPQPMHYRPMFGAYGKAIAASSVTFVSEAALSDGLQQKLGVEKGMLAVENTRSGIGKKAMVFNDATPHIEVDPETYEVRADGELLTCEPATVLPMAQRYFLF.

Positions 131–570 (GGFDAHIHFI…LPMAQRYFLF (440 aa)) constitute a Urease domain. 3 residues coordinate Ni(2+): His-136, His-138, and Lys-219. Lys-219 carries the post-translational modification N6-carboxylysine. His-221 lines the substrate pocket. Residues His-248 and His-274 each coordinate Ni(2+). His-322 serves as the catalytic Proton donor. Position 362 (Asp-362) interacts with Ni(2+).

The protein belongs to the metallo-dependent hydrolases superfamily. Urease alpha subunit family. Heterotrimer of UreA (gamma), UreB (beta) and UreC (alpha) subunits. Three heterotrimers associate to form the active enzyme. Requires Ni cation as cofactor. In terms of processing, carboxylation allows a single lysine to coordinate two nickel ions.

Its subcellular location is the cytoplasm. The enzyme catalyses urea + 2 H2O + H(+) = hydrogencarbonate + 2 NH4(+). It participates in nitrogen metabolism; urea degradation; CO(2) and NH(3) from urea (urease route): step 1/1. In Chelativorans sp. (strain BNC1), this protein is Urease subunit alpha.